Reading from the N-terminus, the 380-residue chain is MAPNIRKSHPLLKMINNSLIDLPTPSNISAWWNFGSLLAMCLATQILTGLLLAMHYTADTTLAFSSVAHTCRNVQYGWLIRNLHANGASFFFICIFLHIGRGLYYGSYLYKETWNTGVVLLLTLMATAFVGYVLPWGQMSFWGATVITNLFSAIPYIGQTLVEWAWGGFSVDNPTLTRFFALHFLLPFMIAGITITHLMFLHESGSNNPLGISSNSDKIPFHPYYSLKDILGLTLMLTPLLTLALFSPNLLGDPENFTPANPLVTPPHIKPEWYFLFAYAILRSIPNKLGGVLALAASVLILLLIPFLHKSKQRTMTFRPLSQTLFWLLVANLLVLTWVGSQPVEHPFIIIGQMASFSYFTILLILFPMTSTLENKMLNH.

The next 4 membrane-spanning stretches (helical) occupy residues 34–54, 78–99, 114–134, and 179–199; these read FGSL…LLAM, WLIR…FLHI, WNTG…GYVL, and FFAL…THLM. Heme b is bound by residues His84 and His98. Residues His183 and His197 each contribute to the heme b site. Position 202 (His202) interacts with a ubiquinone. Helical transmembrane passes span 227–247, 289–309, 321–341, and 348–368; these read LKDI…ALFS, LGGV…PFLH, LSQT…WVGS, and FIII…ILFP.

It belongs to the cytochrome b family. As to quaternary structure, the cytochrome bc1 complex contains 11 subunits: 3 respiratory subunits (MT-CYB, CYC1 and UQCRFS1), 2 core proteins (UQCRC1 and UQCRC2) and 6 low-molecular weight proteins (UQCRH/QCR6, UQCRB/QCR7, UQCRQ/QCR8, UQCR10/QCR9, UQCR11/QCR10 and a cleavage product of UQCRFS1). This cytochrome bc1 complex then forms a dimer. It depends on heme b as a cofactor.

The protein localises to the mitochondrion inner membrane. Component of the ubiquinol-cytochrome c reductase complex (complex III or cytochrome b-c1 complex) that is part of the mitochondrial respiratory chain. The b-c1 complex mediates electron transfer from ubiquinol to cytochrome c. Contributes to the generation of a proton gradient across the mitochondrial membrane that is then used for ATP synthesis. This is Cytochrome b (MT-CYB) from Tragopan satyra (Satyr tragopan).